An 873-amino-acid chain; its full sequence is Alanine--tRNA ligase (873 aa).

Zn(2+) contacts are provided by histidine 562, histidine 566, cysteine 664, and histidine 668.

This sequence belongs to the class-II aminoacyl-tRNA synthetase family. It depends on Zn(2+) as a cofactor.

The protein resides in the cytoplasm. The catalysed reaction is tRNA(Ala) + L-alanine + ATP = L-alanyl-tRNA(Ala) + AMP + diphosphate. Functionally, catalyzes the attachment of alanine to tRNA(Ala) in a two-step reaction: alanine is first activated by ATP to form Ala-AMP and then transferred to the acceptor end of tRNA(Ala). Also edits incorrectly charged Ser-tRNA(Ala) and Gly-tRNA(Ala) via its editing domain. The chain is Alanine--tRNA ligase from Photobacterium profundum (strain SS9).